The chain runs to 457 residues: MFKTLYARIAIYSITVILFSALISFVLTNVYYHYNLKASNDAKIMKTLKEARQYEQSAKPTHIQQYFKHLGQMNYQIMTVDQKGHKTFYGEPFREDTLSQNAINNVLNNKDYHGIKDKPFALFVTGFFDNVTDNTVGINFKTKDGSIAVFMRPDIGETFSEFRTFLAVLLMLLLFISISLVIASTYSIIRPVKKLKLATERLIDGDFETPIKQTRKDEIGTLQYHFNKMRESLGQVDQMRQHFVQNVSHEIKTPLTHIHHLLSELQQTSDNTLRQQYINDIYTITTQLSGLTTELLLLSELDNHQHLLFDDKIQVDQLIKDIIRHEQFAADEKSLIILADLESINFLGNQRLLHQALSNLLINAIKYTDVGGAIDIALQHSHNNIIFTISNDGSPISPQAEARLFERFYKVSKHDNSNGLGLAITKSIIELHHGTIQFTQSNEYVTTFTITLPNNSL.

2 helical membrane-spanning segments follow: residues 9 to 29 and 164 to 184; these read IAIY…VLTN and TFLA…VIAS. An HAMP domain is found at 186–238; that stretch reads YSIIRPVKKLKLATERLIDGDFETPIKQTRKDEIGTLQYHFNKMRESLGQVDQ. The 211-residue stretch at 246 to 456 folds into the Histidine kinase domain; that stretch reads NVSHEIKTPL…TFTITLPNNS (211 aa). His-249 bears the Phosphohistidine; by autocatalysis mark.

In terms of processing, autophosphorylated.

The protein localises to the cell membrane. It carries out the reaction ATP + protein L-histidine = ADP + protein N-phospho-L-histidine.. In terms of biological role, member of the two-component regulatory system HssS/HssR involved in intracellular heme homeostasis and tempering of staphylococcal virulence. HssS functions as a heme sensor histidine kinase which is autophosphorylated at a histidine residue and transfers its phosphate group to an aspartate residue of HssR. HssR/HssS activates the expression of hrtAB, an efflux pump, in response to extracellular heme, hemin, hemoglobin or blood. The polypeptide is Heme sensor protein HssS (hssS) (Staphylococcus aureus (strain MSSA476)).